Reading from the N-terminus, the 37-residue chain is M-oxotoxin-Ot2d (37 aa).

As to expression, expressed by the venom gland.

The protein localises to the secreted. Its function is as follows. Disrupts biological membranes, particularly those rich in phosphocholine. Has antimicrobial activity against Gram-negative bacterium E.coli, Gram-positive bacteria B.subtilis and S.aureus, and hemolytic activity against sheep, pig and guinea pig red blood cells. Has insecticidal activity against S.frugiperda ovarian cells by opening non-selective ion channels. Enhances the insecticidal activity of spider venom neurotoxic peptides. The chain is M-oxotoxin-Ot2d from Oxyopes takobius (Lynx spider).